The following is a 396-amino-acid chain: Putative 3-phosphoinositide-dependent protein kinase 2 (396 aa).

The span at 1–11 shows a compositional bias: polar residues; the sequence is MVRTQTESSTP. Positions 1–53 are disordered; sequence MVRTQTESSTPPGIPGGSRQGPAMDGTAAEPRPGAGSLQHAQPPPQPRKKRPE. A Protein kinase domain is found at 55–315; sequence FKFGKILGEG…YGPLKAHPFF (261 aa). Residues 65 to 67 and Lys-84 each bind ATP; that span reads SFS. The interval 86 to 130 is PIF-pocket; the sequence is LEKRHIIKENKVPYVTRERDVMSRLDHPFFVKLYFTFQDDEKLYF. Residues 133 to 135 and Glu-139 contribute to the ATP site; that span reads SYA. The Proton acceptor role is filled by Asp-178. ATP contacts are provided by Glu-182 and Asp-196.

The protein belongs to the protein kinase superfamily. AGC Ser/Thr protein kinase family. PDPK1 subfamily. Phosphorylated on tyrosine and serine/threonine.

It localises to the cytoplasm. Its subcellular location is the membrane. It carries out the reaction L-seryl-[protein] + ATP = O-phospho-L-seryl-[protein] + ADP + H(+). The enzyme catalyses L-threonyl-[protein] + ATP = O-phospho-L-threonyl-[protein] + ADP + H(+). Its function is as follows. Phosphorylates and activates not only PKB/AKT, but also PKA, PKC-zeta, RPS6KA1 and RPS6KB1. May play a general role in signaling processes and in development. The sequence is that of Putative 3-phosphoinositide-dependent protein kinase 2 from Homo sapiens (Human).